The primary structure comprises 121 residues: Basic phospholipase A2 VRV-PL-VIIIa (121 aa).

Cystine bridges form between C26-C115, C28-C44, C43-C95, C49-C121, C50-C88, C57-C81, and C75-C86. Residues Y27, G29, and G31 each contribute to the Ca(2+) site. H47 is an active-site residue. D48 contributes to the Ca(2+) binding site. Residue D89 is part of the active site.

The protein belongs to the phospholipase A2 family. Group II subfamily. D49 sub-subfamily. In terms of assembly, monomer. Requires Ca(2+) as cofactor. As to expression, expressed by the venom gland.

The protein localises to the secreted. The enzyme catalyses a 1,2-diacyl-sn-glycero-3-phosphocholine + H2O = a 1-acyl-sn-glycero-3-phosphocholine + a fatty acid + H(+). With respect to regulation, oxyphenbutazone (OPB), anisic acid and atropine inhibit the enzymatic activity by binding at the substrate-binding site. P-coumaric acid, resveratrol, spermidine, corticosterone and gramine derivative inhibit the enzymatic activity by binding at the substrate-binding site. Functionally, snake venom phospholipase A2 (PLA2) that shows weak neurotoxicity and medium anticoagulant effects by binding to factor Xa (F10) and inhibiting the prothrombinase activity (IC(50) is 130 nM). It also damages vital organs such as lung, liver and kidney, displays edema-inducing activities when injected into the foot pads of mice and induces necrosis of muscle cells when injected into the thigh muscle. Has a low enzymatic activity. PLA2 catalyzes the calcium-dependent hydrolysis of the 2-acyl groups in 3-sn-phosphoglycerides. In Daboia russelii (Russel's viper), this protein is Basic phospholipase A2 VRV-PL-VIIIa.